Consider the following 472-residue polypeptide: Tryptophan--tRNA ligase, cytoplasmic (472 aa).

Residues 9-65 (SPLELFNSIATQGELVRSLKAGNASKDEIDSAVKMLLSLKMSYKAAMGEDYKANCPP) enclose the WHEP-TRS domain. Lys155 carries the post-translational modification N6-succinyllysine. A 'HIGH' region motif is present at residues 165-174 (PSSEAMHVGH). Residues 350-354 (KMSAS) carry the 'KMSKS' region motif. A Phosphoserine modification is found at Ser352.

Belongs to the class-I aminoacyl-tRNA synthetase family. In terms of assembly, homodimer. Interacts with oxidized form of GAPDH. Proteolytic cleavage generates 2 forms; T1-TrpRS and T2-TrpRS.

The protein localises to the cytoplasm. It carries out the reaction tRNA(Trp) + L-tryptophan + ATP = L-tryptophyl-tRNA(Trp) + AMP + diphosphate + H(+). Its function is as follows. Catalyzes the attachment of tryptophan to tRNA(Trp) in a two-step reaction: tryptophan is first activated by ATP to form Trp-AMP and then transferred to the acceptor end of the tRNA(Trp). Could also possess an angiostatic activity. The protein is Tryptophan--tRNA ligase, cytoplasmic (WARS1) of Pongo abelii (Sumatran orangutan).